Here is a 486-residue protein sequence, read N- to C-terminus: Membrane-bound lytic murein transglycosylase F (486 aa).

A signal peptide spans 1–21; sequence MKRLKINYILIGVVTLLLALA. Residues 22–268 are non-LT domain; sequence LWPNITWRGG…RLEEKYLGHV (247 aa). The interval 269 to 486 is LT domain; that stretch reads GSFDYVDTKT…AVTPELALNF (218 aa). Residue glutamate 313 is part of the active site.

The protein in the N-terminal section; belongs to the bacterial solute-binding protein 3 family. In the C-terminal section; belongs to the transglycosylase Slt family.

It localises to the cell outer membrane. It carries out the reaction Exolytic cleavage of the (1-&gt;4)-beta-glycosidic linkage between N-acetylmuramic acid (MurNAc) and N-acetylglucosamine (GlcNAc) residues in peptidoglycan, from either the reducing or the non-reducing ends of the peptidoglycan chains, with concomitant formation of a 1,6-anhydrobond in the MurNAc residue.. Its function is as follows. Murein-degrading enzyme that degrades murein glycan strands and insoluble, high-molecular weight murein sacculi, with the concomitant formation of a 1,6-anhydromuramoyl product. Lytic transglycosylases (LTs) play an integral role in the metabolism of the peptidoglycan (PG) sacculus. Their lytic action creates space within the PG sacculus to allow for its expansion as well as for the insertion of various structures such as secretion systems and flagella. The protein is Membrane-bound lytic murein transglycosylase F of Serratia proteamaculans (strain 568).